Consider the following 822-residue polypeptide: Nucleolar complex protein 3 (822 aa).

3 disordered regions span residues 1–86 (MGTK…DGDD), 106–142 (ANKR…KEQD), and 172–199 (KPKQ…EDSD). Residues 13–23 (RAAHLKSKKTP) are compositionally biased toward basic residues. The span at 35–45 (KRDQLKSKREQ) shows a compositional bias: basic and acidic residues. Residues 41–48 (SKREQGQN) carry the Nuclear localization signal motif. The segment covering 76-86 (PLEEDNEDGDD) has biased composition (acidic residues). The segment covering 116-126 (TGENDPDQGQS) has biased composition (polar residues). Residues 181–199 (EEEEDDSEEDGDTEYEDSD) are compositionally biased toward acidic residues. Ser187 bears the Phosphoserine mark. A Phosphothreonine modification is found at Thr193. A Phosphoserine modification is found at Ser198. A coiled-coil region spans residues 445 to 509 (KIKNVNLDAE…NKQAKHQKLT (65 aa)).

Belongs to the CBF/MAK21 family.

The protein resides in the nucleus. It is found in the nucleolus. This is Nucleolar complex protein 3 from Drosophila melanogaster (Fruit fly).